Consider the following 86-residue polypeptide: Large ribosomal subunit protein uL23 (86 aa).

The protein belongs to the universal ribosomal protein uL23 family. In terms of assembly, part of the 50S ribosomal subunit. Contacts protein L29.

Its function is as follows. Binds to 23S rRNA. One of the proteins that surrounds the polypeptide exit tunnel on the outside of the ribosome. The sequence is that of Large ribosomal subunit protein uL23 from Pyrococcus abyssi (strain GE5 / Orsay).